The primary structure comprises 819 residues: Leucine--tRNA ligase (819 aa).

Residues Pro-40–His-51 carry the 'HIGH' region motif. The short motif at Lys-600–Ser-604 is the 'KMSKS' region element. Residue Lys-603 coordinates ATP.

The protein belongs to the class-I aminoacyl-tRNA synthetase family.

Its subcellular location is the cytoplasm. The enzyme catalyses tRNA(Leu) + L-leucine + ATP = L-leucyl-tRNA(Leu) + AMP + diphosphate. This Chlamydia trachomatis serovar D (strain ATCC VR-885 / DSM 19411 / UW-3/Cx) protein is Leucine--tRNA ligase.